The sequence spans 892 residues: DNA mismatch repair protein MutS (892 aa).

607-614 (GPNMSGKS) serves as a coordination point for ATP.

It belongs to the DNA mismatch repair MutS family.

Its function is as follows. This protein is involved in the repair of mismatches in DNA. It is possible that it carries out the mismatch recognition step. This protein has a weak ATPase activity. The sequence is that of DNA mismatch repair protein MutS from Bacillus cereus (strain G9842).